We begin with the raw amino-acid sequence, 227 residues long: Protein FdhD (227 aa).

210-215 (FARNGK) provides a ligand contact to Mo-bis(molybdopterin guanine dinucleotide).

The protein belongs to the FdhD family.

It localises to the cytoplasm. Its function is as follows. Required for formate dehydrogenase (FDH) activity. The protein is Protein FdhD of Methanocaldococcus jannaschii (strain ATCC 43067 / DSM 2661 / JAL-1 / JCM 10045 / NBRC 100440) (Methanococcus jannaschii).